Reading from the N-terminus, the 257-residue chain is Electron transfer flavoprotein subunit beta (257 aa).

It belongs to the ETF beta-subunit/FixA family. As to quaternary structure, heterodimer of an alpha and a beta subunit. The cofactor is FAD. Requires AMP as cofactor.

The electron transfer flavoprotein serves as a specific electron acceptor for other dehydrogenases. It transfers the electrons to the main respiratory chain via ETF-ubiquinone oxidoreductase (ETF dehydrogenase). The sequence is that of Electron transfer flavoprotein subunit beta (etfB) from Bacillus subtilis (strain 168).